The primary structure comprises 251 residues: Ribonuclease 3 (251 aa).

The RNase III domain maps to 3 to 125 (LATLETRLGH…LFGAVFLDAG (123 aa)). E38 serves as a coordination point for Mg(2+). D42 is a catalytic residue. Residues D111 and E114 each coordinate Mg(2+). E114 is a catalytic residue. The DRBM domain maps to 152–222 (DAKTLLQEFL…AKLALEAALV (71 aa)).

This sequence belongs to the ribonuclease III family. As to quaternary structure, homodimer. Mg(2+) is required as a cofactor.

It is found in the cytoplasm. It catalyses the reaction Endonucleolytic cleavage to 5'-phosphomonoester.. Digests double-stranded RNA. Involved in the processing of primary rRNA transcript to yield the immediate precursors to the large and small rRNAs (23S and 16S). Processes some mRNAs, and tRNAs when they are encoded in the rRNA operon. Processes pre-crRNA and tracrRNA of type II CRISPR loci if present in the organism. The chain is Ribonuclease 3 from Bordetella avium (strain 197N).